We begin with the raw amino-acid sequence, 428 residues long: 3-oxo-tetronate kinase (428 aa).

Residues Ser-267, 365-368 (GGET), and Gly-409 each bind ATP.

This sequence belongs to the four-carbon acid sugar kinase family.

It catalyses the reaction 3-dehydro-L-erythronate + ATP = 3-dehydro-4-O-phospho-L-erythronate + ADP + H(+). It carries out the reaction 3-dehydro-D-erythronate + ATP = 3-dehydro-4-O-phospho-D-erythronate + ADP + H(+). Its function is as follows. Catalyzes the ATP-dependent phosphorylation of 3-oxo-tetronate to 3-oxo-tetronate 4-phosphate. The sequence is that of 3-oxo-tetronate kinase from Burkholderia multivorans (strain ATCC 17616 / 249).